Here is a 517-residue protein sequence, read N- to C-terminus: 2,3-bisphosphoglycerate-independent phosphoglycerate mutase (517 aa).

Residues aspartate 14 and serine 64 each contribute to the Mn(2+) site. The active-site Phosphoserine intermediate is serine 64. Residues histidine 125, 155–156 (RD), arginine 187, arginine 193, 259–262 (RPDR), and lysine 334 each bind substrate. Positions 401, 405, 442, 443, and 461 each coordinate Mn(2+).

The protein belongs to the BPG-independent phosphoglycerate mutase family. In terms of assembly, monomer. Requires Mn(2+) as cofactor.

It carries out the reaction (2R)-2-phosphoglycerate = (2R)-3-phosphoglycerate. It participates in carbohydrate degradation; glycolysis; pyruvate from D-glyceraldehyde 3-phosphate: step 3/5. In terms of biological role, catalyzes the interconversion of 2-phosphoglycerate and 3-phosphoglycerate. The chain is 2,3-bisphosphoglycerate-independent phosphoglycerate mutase from Symbiobacterium thermophilum (strain DSM 24528 / JCM 14929 / IAM 14863 / T).